The sequence spans 353 residues: Photosystem II protein D1 (353 aa).

N-acetylthreonine is present on T2. At T2 the chain carries Phosphothreonine. Transmembrane regions (helical) follow at residues 29–46 (YIGW…TATS), 118–133 (HFLL…EWEL), and 142–156 (WIAV…AATA). H118 contributes to the chlorophyll a binding site. Y126 serves as a coordination point for pheophytin a. Residues D170 and E189 each coordinate [CaMn4O5] cluster. The chain crosses the membrane as a helical span at residues 197 to 218 (FHMLGVAGVFGGSLFSAMHGSL). H198 is a chlorophyll a binding site. A quinone-binding positions include H215 and 264–265 (SF). H215 is a binding site for Fe cation. H272 lines the Fe cation pocket. Residues 274-288 (FLAAWPVVGIWFTAL) form a helical membrane-spanning segment. Residues H332, E333, D342, and A344 each contribute to the [CaMn4O5] cluster site. Positions 345 to 353 (SIEAPLVNG) are excised as a propeptide.

Belongs to the reaction center PufL/M/PsbA/D family. PSII is composed of 1 copy each of membrane proteins PsbA, PsbB, PsbC, PsbD, PsbE, PsbF, PsbH, PsbI, PsbJ, PsbK, PsbL, PsbM, PsbT, PsbX, PsbY, PsbZ, Psb30/Ycf12, at least 3 peripheral proteins of the oxygen-evolving complex and a large number of cofactors. It forms dimeric complexes. Requires The D1/D2 heterodimer binds P680, chlorophylls that are the primary electron donor of PSII, and subsequent electron acceptors. It shares a non-heme iron and each subunit binds pheophytin, quinone, additional chlorophylls, carotenoids and lipids. D1 provides most of the ligands for the Mn4-Ca-O5 cluster of the oxygen-evolving complex (OEC). There is also a Cl(-1) ion associated with D1 and D2, which is required for oxygen evolution. The PSII complex binds additional chlorophylls, carotenoids and specific lipids. as cofactor. Tyr-161 forms a radical intermediate that is referred to as redox-active TyrZ, YZ or Y-Z. Post-translationally, C-terminally processed by CTPA; processing is essential to allow assembly of the oxygen-evolving complex and thus photosynthetic growth.

The protein localises to the plastid. It is found in the chloroplast thylakoid membrane. The enzyme catalyses 2 a plastoquinone + 4 hnu + 2 H2O = 2 a plastoquinol + O2. Functionally, photosystem II (PSII) is a light-driven water:plastoquinone oxidoreductase that uses light energy to abstract electrons from H(2)O, generating O(2) and a proton gradient subsequently used for ATP formation. It consists of a core antenna complex that captures photons, and an electron transfer chain that converts photonic excitation into a charge separation. The D1/D2 (PsbA/PsbD) reaction center heterodimer binds P680, the primary electron donor of PSII as well as several subsequent electron acceptors. The polypeptide is Photosystem II protein D1 (Psilotum nudum (Whisk fern)).